Reading from the N-terminus, the 105-residue chain is Met repressor (105 aa).

This sequence belongs to the MetJ family. Homodimer.

It localises to the cytoplasm. Its function is as follows. This regulatory protein, when combined with SAM (S-adenosylmethionine) represses the expression of the methionine regulon and of enzymes involved in SAM synthesis. This is Met repressor from Yersinia enterocolitica serotype O:8 / biotype 1B (strain NCTC 13174 / 8081).